The sequence spans 387 residues: Exodeoxyribonuclease 7 large subunit (387 aa).

The protein belongs to the XseA family. As to quaternary structure, heterooligomer composed of large and small subunits.

The protein localises to the cytoplasm. The enzyme catalyses Exonucleolytic cleavage in either 5'- to 3'- or 3'- to 5'-direction to yield nucleoside 5'-phosphates.. In terms of biological role, bidirectionally degrades single-stranded DNA into large acid-insoluble oligonucleotides, which are then degraded further into small acid-soluble oligonucleotides. This Campylobacter lari (strain RM2100 / D67 / ATCC BAA-1060) protein is Exodeoxyribonuclease 7 large subunit.